A 223-amino-acid polypeptide reads, in one-letter code: Adenylate kinase 4, mitochondrial (223 aa).

15–20 (GSGKGT) is an a ribonucleoside 5'-triphosphate binding site. The tract at residues 35–64 (SSGHFLRENIKANTEVGDMAKQYIEKGLLV) is NMP. AMP is bound by residues Ser36 and Arg41. Position 60 is an N6-succinyllysine (Lys60). Residues 62–64 (LLV), 89–92 (GFPR), and Gln96 each bind AMP. An LID region spans residues 125-162 (RRWIHPPSGRVYNLDFNPPHVHGMDDVTGEPLVQQEDD). A ribonucleoside 5'-triphosphate-binding positions include Arg126 and 135 to 136 (VY). AMP is bound at residue Arg170. Lys175 bears the N6-acetyllysine mark. Lys179 and Lys186 each carry N6-acetyllysine; alternate. 2 positions are modified to N6-succinyllysine; alternate: Lys179 and Lys186. Position 199 (Thr199) interacts with a ribonucleoside 5'-triphosphate.

Belongs to the adenylate kinase family. AK3 subfamily. As to quaternary structure, monomer. Interacts with SLC25A5/ANT2.

The protein resides in the mitochondrion matrix. It carries out the reaction a ribonucleoside 5'-phosphate + ATP = a ribonucleoside 5'-diphosphate + ADP. The catalysed reaction is AMP + ATP = 2 ADP. It catalyses the reaction GTP + AMP = GDP + ADP. The enzyme catalyses CMP + ATP = CDP + ADP. It carries out the reaction GTP + CMP = CDP + GDP. The catalysed reaction is dAMP + ATP = dADP + ADP. It catalyses the reaction dCMP + ATP = dCDP + ADP. The enzyme catalyses a 2'-deoxyribonucleoside 5'-diphosphate + ATP = a 2'-deoxyribonucleoside 5'-triphosphate + ADP. It carries out the reaction a ribonucleoside 5'-diphosphate + ATP = a ribonucleoside 5'-triphosphate + ADP. The catalysed reaction is GDP + ATP = GTP + ADP. It catalyses the reaction CDP + GTP = CTP + GDP. The enzyme catalyses CDP + ATP = CTP + ADP. It carries out the reaction UDP + ATP = UTP + ADP. The catalysed reaction is GTP + UDP = UTP + GDP. It catalyses the reaction dADP + GTP = dATP + GDP. The enzyme catalyses dCDP + GTP = dCTP + GDP. It carries out the reaction dCDP + ATP = dCTP + ADP. The catalysed reaction is dGDP + ATP = dGTP + ADP. It catalyses the reaction dTDP + GTP = dTTP + GDP. The enzyme catalyses dTDP + ATP = dTTP + ADP. Functionally, broad-specificity mitochondrial nucleoside phosphate kinase involved in cellular nucleotide homeostasis by catalyzing nucleoside-phosphate interconversions. Similar to other adenylate kinases, preferentially catalyzes the phosphorylation of the nucleoside monophosphate AMP with ATP as phosphate donor to produce ADP. Phosphorylates only AMP when using GTP as phosphate donor. In vitro, can also catalyze the phosphorylation of CMP, dAMP and dCMP and use GTP as an alternate phosphate donor. Moreover, exhibits a diphosphate kinase activity, producing ATP, CTP, GTP, UTP, TTP, dATP, dCTP and dGTP from the corresponding diphosphate substrates with either ATP or GTP as phosphate donors. Plays a role in controlling cellular ATP levels by regulating phosphorylation and activation of the energy sensor protein kinase AMPK. Plays a protective role in the cellular response to oxidative stress. This is Adenylate kinase 4, mitochondrial from Bos taurus (Bovine).